Reading from the N-terminus, the 779-residue chain is Guanyl-specific ribonuclease pgl-1 (779 aa).

The involved in dimerization stretch occupies residues 203–464 (KLLLEGVKEQ…KRIIDALEKS (262 aa)). Histidine 453 acts as the Proton acceptor in catalysis. 3 disordered regions span residues 563–596 (HEPQ…PTKS), 611–661 (RDAL…GDAT), and 718–779 (GRGG…GGNF). The span at 584–595 (SISTDGWDSPTK) shows a compositional bias: polar residues. Residues 612 to 626 (DALKPDSVNSHRSEE) are compositionally biased toward basic and acidic residues. Positions 699-772 (GGGGGSYGGR…GGDRGGRGGY (74 aa)) are RNA-binding RGG-box.

In terms of assembly, homodimer. Interacts with pgl-2 and pgl-3; this association is not required for P-granule localization of either pgl-2 or pgl-3. Interacts with ife-1. Interacts with prmt-1; the interaction is direct. Interacts with nmad-1. Interacts with P granule components meg-1, meg-3 and meg-4. Does not require metal ions for catalytic activity. is required as a cofactor.

It localises to the cytoplasmic granule. It carries out the reaction [RNA] containing guanosine + H2O = an [RNA fragment]-3'-guanosine-3'-phosphate + a 5'-hydroxy-ribonucleotide-3'-[RNA fragment].. Functionally, guanyl-specific endoribonuclease which cleaves the phosphodiester bond in single-stranded RNA between the 3'-guanylic residue and the 5'-OH residue of adjacent nucleotide, resulting in the formation of a corresponding 2',3'-cyclic phosphate intermediate. Essential role in male and female postembryonic germline development; maternally provided protein maintains a population of proliferating germ cells and zygotic expression is required for correct oogenesis. Together with the P-granule component pgl-3, is involved in the formation of P-granules. Together with pgl-3, probably recruits other granule components such as pos-1, mex-3 and glh-1 to P-granules. In addition, may act redundantly with pgl-3 to protect germ cells from excessive germline apoptosis during normal oogenesis and development of the two gonadal arms. This may in part be through regulating the localization of sir-2.1 which is involved in germ cell apoptosis. May protect somatic cells from excessive apoptosis during normal development. This Caenorhabditis remanei (Caenorhabditis vulgaris) protein is Guanyl-specific ribonuclease pgl-1.